The sequence spans 339 residues: UDP-N-acetylglucosamine--N-acetylmuramyl-(pentapeptide) pyrophosphoryl-undecaprenol N-acetylglucosamine transferase (339 aa).

UDP-N-acetyl-alpha-D-glucosamine contacts are provided by residues 11–13 (TGG), N127, R170, S188, I235, and Q280.

This sequence belongs to the glycosyltransferase 28 family. MurG subfamily.

The protein resides in the cell inner membrane. The enzyme catalyses di-trans,octa-cis-undecaprenyl diphospho-N-acetyl-alpha-D-muramoyl-L-alanyl-D-glutamyl-meso-2,6-diaminopimeloyl-D-alanyl-D-alanine + UDP-N-acetyl-alpha-D-glucosamine = di-trans,octa-cis-undecaprenyl diphospho-[N-acetyl-alpha-D-glucosaminyl-(1-&gt;4)]-N-acetyl-alpha-D-muramoyl-L-alanyl-D-glutamyl-meso-2,6-diaminopimeloyl-D-alanyl-D-alanine + UDP + H(+). It functions in the pathway cell wall biogenesis; peptidoglycan biosynthesis. Its function is as follows. Cell wall formation. Catalyzes the transfer of a GlcNAc subunit on undecaprenyl-pyrophosphoryl-MurNAc-pentapeptide (lipid intermediate I) to form undecaprenyl-pyrophosphoryl-MurNAc-(pentapeptide)GlcNAc (lipid intermediate II). The chain is UDP-N-acetylglucosamine--N-acetylmuramyl-(pentapeptide) pyrophosphoryl-undecaprenol N-acetylglucosamine transferase from Thermotoga sp. (strain RQ2).